The following is a 160-amino-acid chain: SsrA-binding protein (160 aa).

Belongs to the SmpB family.

It localises to the cytoplasm. Its function is as follows. Required for rescue of stalled ribosomes mediated by trans-translation. Binds to transfer-messenger RNA (tmRNA), required for stable association of tmRNA with ribosomes. tmRNA and SmpB together mimic tRNA shape, replacing the anticodon stem-loop with SmpB. tmRNA is encoded by the ssrA gene; the 2 termini fold to resemble tRNA(Ala) and it encodes a 'tag peptide', a short internal open reading frame. During trans-translation Ala-aminoacylated tmRNA acts like a tRNA, entering the A-site of stalled ribosomes, displacing the stalled mRNA. The ribosome then switches to translate the ORF on the tmRNA; the nascent peptide is terminated with the 'tag peptide' encoded by the tmRNA and targeted for degradation. The ribosome is freed to recommence translation, which seems to be the essential function of trans-translation. The polypeptide is SsrA-binding protein (Pasteurella multocida (strain Pm70)).